The following is a 280-amino-acid chain: Octanoyltransferase LIP2p2, chloroplastic (280 aa).

A chloroplast-targeting transit peptide spans Met1–Lys34. The region spanning Gln81 to Met270 is the BPL/LPL catalytic domain. Residues Arg123–His130, Ala191–Gly193, and Gly204–Ala206 each bind substrate. The active-site Acyl-thioester intermediate is Cys222.

It belongs to the LipB family. As to expression, expressed in roots, leaves, cauline leaves, stems, siliques and flowers.

Its subcellular location is the plastid. The protein resides in the chloroplast. The catalysed reaction is octanoyl-[ACP] + L-lysyl-[protein] = N(6)-octanoyl-L-lysyl-[protein] + holo-[ACP] + H(+). Its pathway is protein modification; protein lipoylation via endogenous pathway; protein N(6)-(lipoyl)lysine from octanoyl-[acyl-carrier-protein]: step 1/2. Functionally, catalyzes the transfer of endogenously produced octanoic acid from octanoyl-acyl-carrier-protein onto the lipoyl domains of lipoate-dependent enzymes. Lipoyl-ACP can also act as a substrate although octanoyl-ACP is likely to be the physiological substrate. Together with LIP1P is essential for de novo plastidial protein lipoylation during seed development. Acts redundantly with LIP2P. This chain is Octanoyltransferase LIP2p2, chloroplastic, found in Arabidopsis thaliana (Mouse-ear cress).